Reading from the N-terminus, the 487-residue chain is N-succinylglutamate 5-semialdehyde dehydrogenase (487 aa).

G221–G226 is an NAD(+) binding site. Active-site residues include E244 and C278.

The protein belongs to the aldehyde dehydrogenase family. AstD subfamily.

It carries out the reaction N-succinyl-L-glutamate 5-semialdehyde + NAD(+) + H2O = N-succinyl-L-glutamate + NADH + 2 H(+). The protein operates within amino-acid degradation; L-arginine degradation via AST pathway; L-glutamate and succinate from L-arginine: step 4/5. Catalyzes the NAD-dependent reduction of succinylglutamate semialdehyde into succinylglutamate. In Burkholderia pseudomallei (strain 1106a), this protein is N-succinylglutamate 5-semialdehyde dehydrogenase.